The sequence spans 260 residues: NH(3)-dependent NAD(+) synthetase (260 aa).

Residue 31 to 38 participates in ATP binding; the sequence is GLSGGLDS. D37 contributes to the Mg(2+) binding site. Deamido-NAD(+) is bound at residue R112. T132 provides a ligand contact to ATP. E137 serves as a coordination point for Mg(2+). The ATP site is built by K161 and S183.

This sequence belongs to the NAD synthetase family. As to quaternary structure, homodimer.

It catalyses the reaction deamido-NAD(+) + NH4(+) + ATP = AMP + diphosphate + NAD(+) + H(+). The protein operates within cofactor biosynthesis; NAD(+) biosynthesis; NAD(+) from deamido-NAD(+) (ammonia route): step 1/1. Catalyzes the ATP-dependent amidation of deamido-NAD to form NAD. Uses ammonia as a nitrogen source. The polypeptide is NH(3)-dependent NAD(+) synthetase (Helicobacter pylori (strain ATCC 700392 / 26695) (Campylobacter pylori)).